The following is a 440-amino-acid chain: T-box transcription factor T homolog 2 (440 aa).

Residues 44–215 (LWEKFKSLTN…HNPFAKAFLD (172 aa)) constitute a DNA-binding region (T-box). Disordered regions lie at residues 282–303 (APYPHPYQRSSPPTNYGHDTAA) and 393–440 (TTAS…MPSM). The segment covering 409-440 (STDSGYGHSTTPPAPQTRITSNNWSPMTMPSM) has biased composition (polar residues).

As to expression, mesoderm and notochord.

It localises to the nucleus. Its function is as follows. Involved in the transcriptional regulation of genes required for mesoderm formation and differentiation. This Branchiostoma floridae (Florida lancelet) protein is T-box transcription factor T homolog 2.